A 71-amino-acid polypeptide reads, in one-letter code: Equinin B (71 aa).

Positions 1–11 are cleaved as a signal peptide; sequence MAVIMVDQAEG. Residues 46-71 constitute a propeptide that is removed on maturation; the sequence is GDEPQQMALDDESDPLVILPNNYNDY.

In terms of processing, contains 4 disulfide bonds.

The protein resides in the secreted. It localises to the target cell membrane. Antimicrobial peptide with inhibitory activity against both Gram-positive and Gram-negative bacteria (E.coli (MIC=0.25 ug/ml), M.lysodeikticus (MIC=0.25 ug/ml), and V.alginolyticus (MIC=0.25 ug/ml)). Does not show hemolytic activity. The chain is Equinin B from Actinia equina (Beadlet anemone).